The primary structure comprises 186 residues: Holliday junction branch migration complex subunit RuvA (186 aa).

Residues 1–61 (MYSYIKGKVV…ENLQILYGFN (61 aa)) form a domain I region. Positions 62–134 (DNKNLLFFKK…LKGDLIFSEK (73 aa)) are domain II. Positions 134–135 (KI) are flexible linker. The tract at residues 136-186 (ILNPKKTELEKILLNLGFVKKEIKSVLNQIDDKKELELMLKEVLLKLAKNI) is domain III.

The protein belongs to the RuvA family. Homotetramer. Forms an RuvA(8)-RuvB(12)-Holliday junction (HJ) complex. HJ DNA is sandwiched between 2 RuvA tetramers; dsDNA enters through RuvA and exits via RuvB. An RuvB hexamer assembles on each DNA strand where it exits the tetramer. Each RuvB hexamer is contacted by two RuvA subunits (via domain III) on 2 adjacent RuvB subunits; this complex drives branch migration. In the full resolvosome a probable DNA-RuvA(4)-RuvB(12)-RuvC(2) complex forms which resolves the HJ.

It localises to the cytoplasm. The RuvA-RuvB-RuvC complex processes Holliday junction (HJ) DNA during genetic recombination and DNA repair, while the RuvA-RuvB complex plays an important role in the rescue of blocked DNA replication forks via replication fork reversal (RFR). RuvA specifically binds to HJ cruciform DNA, conferring on it an open structure. The RuvB hexamer acts as an ATP-dependent pump, pulling dsDNA into and through the RuvAB complex. HJ branch migration allows RuvC to scan DNA until it finds its consensus sequence, where it cleaves and resolves the cruciform DNA. This is Holliday junction branch migration complex subunit RuvA from Phytoplasma mali (strain AT).